Here is a 352-residue protein sequence, read N- to C-terminus: Biotin synthase (352 aa).

The region spanning 44 to 262 is the Radical SAM core domain; that stretch reads NRVQVSTLLS…LAVARILMPK (219 aa). [4Fe-4S] cluster contacts are provided by cysteine 59, cysteine 63, and cysteine 66. Cysteine 103, cysteine 134, cysteine 194, and arginine 266 together coordinate [2Fe-2S] cluster.

Belongs to the radical SAM superfamily. Biotin synthase family. Homodimer. Requires [4Fe-4S] cluster as cofactor. It depends on [2Fe-2S] cluster as a cofactor.

The catalysed reaction is (4R,5S)-dethiobiotin + (sulfur carrier)-SH + 2 reduced [2Fe-2S]-[ferredoxin] + 2 S-adenosyl-L-methionine = (sulfur carrier)-H + biotin + 2 5'-deoxyadenosine + 2 L-methionine + 2 oxidized [2Fe-2S]-[ferredoxin]. It participates in cofactor biosynthesis; biotin biosynthesis; biotin from 7,8-diaminononanoate: step 2/2. Its function is as follows. Catalyzes the conversion of dethiobiotin (DTB) to biotin by the insertion of a sulfur atom into dethiobiotin via a radical-based mechanism. This Pseudomonas entomophila (strain L48) protein is Biotin synthase.